The following is a 338-amino-acid chain: Malate dehydrogenase, mitochondrial (338 aa).

The N-terminal 24 residues, Met1–Asn24, are a transit peptide targeting the mitochondrion. Residues Gly31–Gly37 and Asp57 each bind NAD(+). An O-linked (GlcNAc) serine glycan is attached at Ser33. An N6-acetyllysine; alternate mark is found at Lys78 and Lys91. Residues Lys78 and Lys91 each carry the N6-succinyllysine; alternate modification. Positions 104 and 110 each coordinate substrate. Residues Asn117 and Ile140–Asn142 contribute to the NAD(+) site. Substrate is bound at residue Asn142. At Lys165 the chain carries N6-acetyllysine. Arg176 contacts substrate. The residue at position 185 (Lys185) is an N6-acetyllysine; alternate. An N6-succinyllysine; alternate modification is found at Lys185. The active-site Proton acceptor is the His200. N6-succinyllysine is present on Lys203. N6-acetyllysine; alternate occurs at positions 215 and 239. An N6-succinyllysine; alternate mark is found at Lys215 and Lys239. Lys239 is subject to N6-malonyllysine; alternate. Position 246 is a phosphoserine (Ser246). Residue Met251 coordinates NAD(+). N6-succinyllysine is present on Lys269. N6-acetyllysine; alternate is present on residues Lys296, Lys301, Lys307, Lys314, and Lys324. Residues Lys296, Lys301, Lys307, Lys314, and Lys324 each carry the N6-succinyllysine; alternate modification. An N6-malonyllysine; alternate modification is found at Lys307. Residue Ser326 is modified to Phosphoserine. Lys328, Lys329, and Lys335 each carry N6-acetyllysine; alternate. At Lys328 the chain carries N6-succinyllysine; alternate. Lys329 carries the post-translational modification N6-malonyllysine; alternate. At Lys335 the chain carries N6-succinyllysine; alternate.

It belongs to the LDH/MDH superfamily. MDH type 1 family. As to quaternary structure, homodimer. Acetylation is enhanced after treatment either with trichostin A (TCA) or with nicotinamide (NAM) with the appearance of tri- and tetraacetylations. Glucose also increases acetylation.

It localises to the mitochondrion matrix. It carries out the reaction (S)-malate + NAD(+) = oxaloacetate + NADH + H(+). Its activity is regulated as follows. Enzyme activity is enhanced by acetylation. The chain is Malate dehydrogenase, mitochondrial (MDH2) from Pongo abelii (Sumatran orangutan).